A 1656-amino-acid chain; its full sequence is Probable phospholipid-transporting ATPase DNF3 (1656 aa).

Topologically, residues 1 to 164 (MGIADGQRRR…PRQLYAQFSK (164 aa)) are lumenal. The tract at residues 36–74 (ELEDINESKTFSGSDNNDKDDRDETSGNYAAEEDYEMEE) is disordered. Residues 51-60 (NNDKDDRDET) show a composition bias toward basic and acidic residues. Residues 165 to 185 (LANTYFFIVAVLQMIPGWSTT) traverse the membrane as a helical segment. At 186 to 451 (GTYTTIIPLC…RTKAPKLQRK (266 aa)) the chain is on the cytoplasmic side. Residues 452–472 (INMIIVFMVFVVATISLFSYL) form a helical membrane-spanning segment. Residues 473-495 (GHVLHKKKYIDQNKAWYLFQADA) are Lumenal-facing. The chain crosses the membrane as a helical span at residues 496 to 516 (GVAPTIMSFIIMYNTVIPLSL). Topologically, residues 517–1157 (YVTMEIIKVV…ISKMNAVSQE (641 aa)) are cytoplasmic. The 4-aspartylphosphate intermediate role is filled by aspartate 566. Aspartate 566, lysine 567, and threonine 568 together coordinate ATP. Aspartate 566 serves as a coordination point for Mg(2+). Residue threonine 568 coordinates Mg(2+). At serine 627 the chain carries Phosphoserine. Residues glutamate 765, phenylalanine 813, serine 815, lysine 818, lysine 838, arginine 1034, threonine 1035, threonine 1114, glycine 1115, aspartate 1116, 1167 to 1174 (VVVIDGAT), arginine 1202, and lysine 1208 each bind ATP. The chain crosses the membrane as a helical span at residues 1158 to 1178 (VDSGNIAHCVVVIDGATMAMF). Residues 1179–1318 (EGNPTYMSVF…MFSGSSLYEP (140 aa)) lie on the Lumenal side of the membrane. Aspartate 1229 contacts Mg(2+). ATP is bound by residues asparagine 1232 and aspartate 1233. Residues 1319 to 1339 (WSLSMFNTLFTSLPVLCIGMF) form a helical membrane-spanning segment. The Cytoplasmic segment spans residues 1340-1365 (EKDLKPMTLLTVPELYSYGRLSQGFN). A helical transmembrane segment spans residues 1366-1386 (WLIFMEWVILATTNSLIITFL). At 1387–1395 (NVVMWGMSS) the chain is on the lumenal side. A helical transmembrane segment spans residues 1396–1416 (LSDNTMYPLGLINFTAIVALI). Residues 1417-1432 (NVKSQFVEMHNRNWLA) are Cytoplasmic-facing. Residues 1433–1453 (FTSVVLSCGGWLVWCCALPIL) traverse the membrane as a helical segment. Topologically, residues 1454 to 1473 (NNTDQIYDVAYGFYNHFGKD) are lumenal. Residues 1474–1494 (ITFWCTSLVLALLPITLDIVY) form a helical membrane-spanning segment. The Cytoplasmic segment spans residues 1495-1656 (KTFKVMIWPS…IIQARLKDLE (162 aa)). A disordered region spans residues 1554–1576 (PRTNSRASAKTHNSSIYSMSNGN).

The protein belongs to the cation transport ATPase (P-type) (TC 3.A.3) family. Type IV subfamily. Component of a flippase complex consisting of DNF3 and YNR048W/CRF1. Interacts with YNR048W/CRF1; the interaction is direct and required for proper expression and endoplasmic reticulum (ER) export of either partner. Mg(2+) is required as a cofactor.

The protein localises to the golgi apparatus. Its subcellular location is the trans-Golgi network membrane. It localises to the endosome membrane. It carries out the reaction ATP + H2O + phospholipidSide 1 = ADP + phosphate + phospholipidSide 2.. The catalysed reaction is a 1,2-diacyl-sn-glycero-3-phosphocholine(out) + ATP + H2O = a 1,2-diacyl-sn-glycero-3-phosphocholine(in) + ADP + phosphate + H(+). The enzyme catalyses a 1,2-diacyl-sn-glycero-3-phosphoethanolamine(out) + ATP + H2O = a 1,2-diacyl-sn-glycero-3-phosphoethanolamine(in) + ADP + phosphate + H(+). Catalytic component of a P4-ATPase flippase complex which catalyzes the hydrolysis of ATP coupled to the transport of phosphatidylcholine and small amounts of phosphatidylethanolamine from the lumen to the cytosolic leaflet of the trans-Golgi network and ensures the maintenance of asymmetric distribution of phospholipids. May be involved in transport from early endosomes to the trans-Golgi network (TGN). The polypeptide is Probable phospholipid-transporting ATPase DNF3 (DNF3) (Saccharomyces cerevisiae (strain ATCC 204508 / S288c) (Baker's yeast)).